Consider the following 433-residue polypeptide: Enolase (433 aa).

Glutamine 167 contacts (2R)-2-phosphoglycerate. Glutamate 209 (proton donor) is an active-site residue. The Mg(2+) site is built by aspartate 246, glutamate 291, and aspartate 318. Positions 343, 372, 373, and 394 each coordinate (2R)-2-phosphoglycerate. Lysine 343 functions as the Proton acceptor in the catalytic mechanism.

This sequence belongs to the enolase family. Component of the RNA degradosome, a multiprotein complex involved in RNA processing and mRNA degradation. Requires Mg(2+) as cofactor.

The protein localises to the cytoplasm. It is found in the secreted. It localises to the cell surface. It catalyses the reaction (2R)-2-phosphoglycerate = phosphoenolpyruvate + H2O. The protein operates within carbohydrate degradation; glycolysis; pyruvate from D-glyceraldehyde 3-phosphate: step 4/5. In terms of biological role, catalyzes the reversible conversion of 2-phosphoglycerate (2-PG) into phosphoenolpyruvate (PEP). It is essential for the degradation of carbohydrates via glycolysis. The polypeptide is Enolase (Pasteurella multocida (strain Pm70)).